Consider the following 344-residue polypeptide: Small ribosomal subunit biogenesis GTPase RsgA (344 aa).

One can recognise a CP-type G domain in the interval 100-268 (KNELSRPDYY…LIDSPGIREF (169 aa)). Residues 156 to 159 (NKID) and 210 to 218 (GQSGVGKSS) contribute to the GTP site. C292, C297, H299, and C305 together coordinate Zn(2+).

This sequence belongs to the TRAFAC class YlqF/YawG GTPase family. RsgA subfamily. In terms of assembly, monomer. Associates with 30S ribosomal subunit, binds 16S rRNA. Zn(2+) serves as cofactor.

Its subcellular location is the cytoplasm. One of several proteins that assist in the late maturation steps of the functional core of the 30S ribosomal subunit. Helps release RbfA from mature subunits. May play a role in the assembly of ribosomal proteins into the subunit. Circularly permuted GTPase that catalyzes slow GTP hydrolysis, GTPase activity is stimulated by the 30S ribosomal subunit. This Actinobacillus pleuropneumoniae serotype 5b (strain L20) protein is Small ribosomal subunit biogenesis GTPase RsgA.